The sequence spans 1315 residues: Myopalladin (1315 aa).

Disordered stretches follow at residues 19–60, 81–145, 166–204, and 230–266; these read SYLA…DLPD, INHD…TQSK, HSSKRIRPRACKNHKSKTESQNKVLQENSPTFSDLTERR, and EAKRREAELAAGEAAAGDSTPGSSPSSLYYEEPLGQP. Composition is skewed to basic and acidic residues over residues 23 to 35 and 84 to 104; these read ETRHRGDNERSRA and DPLERVDEAQARKRLSSDQTK. A phosphoserine mark is found at S99 and S129. Residues 166–180 are compositionally biased toward basic residues; that stretch reads HSSKRIRPRACKNHK. The segment covering 184–199 has biased composition (polar residues); the sequence is ESQNKVLQENSPTFSD. Residues 219 to 240 adopt a coiled-coil conformation; sequence DNELNHAIEQREAKRREAELAA. The residue at position 249 (T249) is a Phosphothreonine. The region spanning 267–357 is the Ig-like 1 domain; the sequence is PRFTQKLRSR…DSTSAEIYIE (91 aa). C288 and C339 are oxidised to a cystine. The interval 359 to 392 is disordered; it reads VSSSDSEGDPNKEEMNRIQKPNEVSSPPTTSAAI. The 97-residue stretch at 432–528 folds into the Ig-like 2 domain; that stretch reads PVFTKMLQNL…GTVSSIAQLD (97 aa). The cysteines at positions 453 and 512 are disulfide-linked. 3 disordered regions span residues 535–652, 674–704, and 725–747; these read ISDN…VLAK, LQNTSPSSPKESLHMSALNSAPPAVTISSKQ, and SSTSTATVSPSSSPVFTLSNTPQ. Residues 609–623 are compositionally biased toward polar residues; the sequence is SSGSGAANTSQTRPN. S641 carries the post-translational modification Phosphoserine. Over residues 725–741 the composition is skewed to low complexity; the sequence is SSTSTATVSPSSSPVFT. Position 754 is a phosphoserine (S754). Disordered regions lie at residues 762-814 and 840-865; these read HPST…TPVS and NAMGLPKSAPSVPSQGLMKKTTKAPQ. A compositionally biased stretch (pro residues) spans 779-790; the sequence is PAPPSPAEPAAP. Phosphoserine is present on residues S809 and S814. Phosphoserine is present on residues S903 and S924. Ig-like domains lie at 941 to 1025, 1068 to 1157, and 1167 to 1257; these read PIFD…GRIS, PHFL…LELT, and PVIL…ARLD. An intrachain disulfide couples C1089 to C1141.

Belongs to the myotilin/palladin family. In terms of assembly, interacts with TTN/titin, NEB, NEBL, ACTN2 and CARP.

Its subcellular location is the cytoplasm. The protein localises to the nucleus. The protein resides in the myofibril. It is found in the sarcomere. It localises to the z line. Its function is as follows. Component of the sarcomere that tethers together nebulin (skeletal muscle) and nebulette (cardiac muscle) to alpha-actinin, at the Z lines. The protein is Myopalladin (Mypn) of Mus musculus (Mouse).